Here is a 232-residue protein sequence, read N- to C-terminus: 5'-methylthioadenosine/S-adenosylhomocysteine nucleosidase (232 aa).

Residue Glu-14 is the Proton acceptor of the active site. Residues Gly-80, Val-154, and 175-176 contribute to the substrate site; that span reads ME. Asp-199 serves as the catalytic Proton donor.

It belongs to the PNP/UDP phosphorylase family. MtnN subfamily.

The enzyme catalyses S-adenosyl-L-homocysteine + H2O = S-(5-deoxy-D-ribos-5-yl)-L-homocysteine + adenine. It catalyses the reaction S-methyl-5'-thioadenosine + H2O = 5-(methylsulfanyl)-D-ribose + adenine. The catalysed reaction is 5'-deoxyadenosine + H2O = 5-deoxy-D-ribose + adenine. It functions in the pathway amino-acid biosynthesis; L-methionine biosynthesis via salvage pathway; S-methyl-5-thio-alpha-D-ribose 1-phosphate from S-methyl-5'-thioadenosine (hydrolase route): step 1/2. Catalyzes the irreversible cleavage of the glycosidic bond in both 5'-methylthioadenosine (MTA) and S-adenosylhomocysteine (SAH/AdoHcy) to adenine and the corresponding thioribose, 5'-methylthioribose and S-ribosylhomocysteine, respectively. Also cleaves 5'-deoxyadenosine, a toxic by-product of radical S-adenosylmethionine (SAM) enzymes, into 5-deoxyribose and adenine. In Actinobacillus pleuropneumoniae serotype 5b (strain L20), this protein is 5'-methylthioadenosine/S-adenosylhomocysteine nucleosidase.